A 798-amino-acid polypeptide reads, in one-letter code: Protocadherin beta-2 (798 aa).

The first 30 residues, Met-1–Cys-30, serve as a signal peptide directing secretion. Residues Gln-31–Leu-692 lie on the Extracellular side of the membrane. Cadherin domains are found at residues Val-37 to Phe-135, Leu-136 to Phe-244, Tyr-249 to Leu-349, Leu-354 to Phe-453, and Tyr-458 to Val-563. A glycan (N-linked (GlcNAc...) asparagine) is linked at Asn-171. Position 299 is an N6-acetyllysine (Lys-299). Asn-420 and Asn-438 each carry an N-linked (GlcNAc...) asparagine glycan. Residue Asn-569 is glycosylated (N-linked (GlcNAc...) asparagine). Positions Gly-570 to Leu-673 constitute a Cadherin 6 domain. Residues Val-693–Val-713 form a helical membrane-spanning segment. Residues Arg-714 to Thr-798 lie on the Cytoplasmic side of the membrane.

It is found in the cell membrane. Its function is as follows. Potential calcium-dependent cell-adhesion protein. May be involved in the establishment and maintenance of specific neuronal connections in the brain. The polypeptide is Protocadherin beta-2 (PCDHB2) (Homo sapiens (Human)).